We begin with the raw amino-acid sequence, 348 residues long: Phosphate acyltransferase (348 aa).

This sequence belongs to the PlsX family. In terms of assembly, homodimer. Probably interacts with PlsY.

The protein localises to the cytoplasm. It catalyses the reaction a fatty acyl-[ACP] + phosphate = an acyl phosphate + holo-[ACP]. It participates in lipid metabolism; phospholipid metabolism. Catalyzes the reversible formation of acyl-phosphate (acyl-PO(4)) from acyl-[acyl-carrier-protein] (acyl-ACP). This enzyme utilizes acyl-ACP as fatty acyl donor, but not acyl-CoA. This chain is Phosphate acyltransferase, found in Synechocystis sp. (strain ATCC 27184 / PCC 6803 / Kazusa).